The chain runs to 442 residues: Proline--tRNA ligase (442 aa).

Belongs to the class-II aminoacyl-tRNA synthetase family. ProS type 2 subfamily. In terms of assembly, homodimer.

Its subcellular location is the cytoplasm. It carries out the reaction tRNA(Pro) + L-proline + ATP = L-prolyl-tRNA(Pro) + AMP + diphosphate. Functionally, catalyzes the attachment of proline to tRNA(Pro) in a two-step reaction: proline is first activated by ATP to form Pro-AMP and then transferred to the acceptor end of tRNA(Pro). The protein is Proline--tRNA ligase of Brucella suis (strain ATCC 23445 / NCTC 10510).